We begin with the raw amino-acid sequence, 449 residues long: Alpha-L-fucosidase (449 aa).

The first 19 residues, 1 to 19 (MGLLLLLSLLSACFQPRYA), serve as a signal peptide directing secretion. 4 N-linked (GlcNAc...) asparagine glycosylation sites follow: Asn156, Asn224, Asn362, and Asn375.

This sequence belongs to the glycosyl hydrolase 29 family. In terms of assembly, homotetramer.

The protein resides in the secreted. The catalysed reaction is an alpha-L-fucoside + H2O = L-fucose + an alcohol. Its function is as follows. Alpha-L-fucosidase is responsible for hydrolyzing the alpha-1,6-linked fucose joined to the reducing-end N-acetylglucosamine of the carbohydrate moieties of glycoproteins. The chain is Alpha-L-fucosidase from Branchiostoma floridae (Florida lancelet).